The following is a 231-amino-acid chain: Probable pyridoxamine 5'-phosphate oxidase (231 aa).

20-23 (QYEK) contacts pyridoxal 5'-phosphate. Position 74–77 (74–77 (RLVL)) interacts with FMN. Lys-79 contributes to the pyridoxal 5'-phosphate binding site. FMN contacts are provided by residues 89 to 90 (FT), 96 to 97 (KK), and Gln-119. 3 residues coordinate pyridoxal 5'-phosphate: Tyr-137, Arg-141, and Ser-145. FMN-binding positions include 154–155 (QS) and Trp-202. Position 208–210 (208–210 (RLH)) interacts with pyridoxal 5'-phosphate. Residue Arg-212 coordinates FMN.

Belongs to the pyridoxamine 5'-phosphate oxidase family. Homodimer. It depends on FMN as a cofactor.

It catalyses the reaction pyridoxamine 5'-phosphate + O2 + H2O = pyridoxal 5'-phosphate + H2O2 + NH4(+). The enzyme catalyses pyridoxine 5'-phosphate + O2 = pyridoxal 5'-phosphate + H2O2. It functions in the pathway cofactor metabolism; pyridoxal 5'-phosphate salvage; pyridoxal 5'-phosphate from pyridoxamine 5'-phosphate: step 1/1. Its pathway is cofactor metabolism; pyridoxal 5'-phosphate salvage; pyridoxal 5'-phosphate from pyridoxine 5'-phosphate: step 1/1. Catalyzes the oxidation of either pyridoxine 5'-phosphate (PNP) or pyridoxamine 5'-phosphate (PMP) into pyridoxal 5'-phosphate (PLP). This Schizosaccharomyces pombe (strain 972 / ATCC 24843) (Fission yeast) protein is Probable pyridoxamine 5'-phosphate oxidase.